Consider the following 649-residue polypeptide: Sulfate transporter 1.1 (649 aa).

The segment at 1–20 is disordered; it reads MSGTINPPDGGGSGARNPPV. The Cytoplasmic portion of the chain corresponds to 1–86; the sequence is MSGTINPPDG…AREYTLRKFR (86 aa). A helical membrane pass occupies residues 87 to 107; that stretch reads GDLIAGLTIASLCIPQDIGYA. At 108 to 111 the chain is on the extracellular side; sequence KLAN. A helical membrane pass occupies residues 112–132; it reads VDPKYGLYSSFVPPLIYAGMG. Residues 133 to 136 lie on the Cytoplasmic side of the membrane; it reads SSRD. Residues 137–157 traverse the membrane as a helical segment; it reads IAIGPVAVVSLLVGTLCQAVI. Topologically, residues 158-168 are extracellular; it reads DPKKNPEDYLR. 2 consecutive transmembrane segments (helical) span residues 169–189 and 190–210; these read LVFT…FLRL and GFLI…GAAI. Residues 211 to 248 lie on the Extracellular side of the membrane; the sequence is TIALQQLKGFLGIKTFTKKTDIVSVMHSVFKNAEHGWN. The helical transmembrane segment at 249–269 threads the bilayer; that stretch reads WQTIVIGASFLTFLLVTKFIG. Over 270–275 the chain is Cytoplasmic; that stretch reads KRNRKL. The chain crosses the membrane as a helical span at residues 276–296; the sequence is FWVPAIAPLISVIISTFFVFI. The Extracellular portion of the chain corresponds to 297-334; it reads FRADKQGVQIVKHIDQGINPISVHKIFFSGKYFTEGIR. A helical membrane pass occupies residues 335–355; it reads IGGIAGMVALTEAVAIARTFA. The Cytoplasmic portion of the chain corresponds to 356 to 367; sequence AMKDYQIDGNKE. The helical transmembrane segment at 368–388 threads the bilayer; sequence MIALGTMNVVGSMTSCYIATG. Over 389-404 the chain is Extracellular; it reads SFSRSAVNFMAGVETA. Residues 405–425 traverse the membrane as a helical segment; it reads VSNIVMAIVVALTLEFITPLF. Residues 426–431 are Cytoplasmic-facing; that stretch reads KYTPNA. The helical transmembrane segment at 432-452 threads the bilayer; it reads ILAAIIISAVLGLIDIDAAIL. Over 453–465 the chain is Extracellular; it reads IWRIDKLDFLACM. A helical transmembrane segment spans residues 466 to 486; that stretch reads GAFLGVIFISVEIGLLIAVVI. Residues 487-649 are Cytoplasmic-facing; it reads SFAKILLQVT…CSTEVAEQQT (163 aa). Positions 517–640 constitute an STAS domain; that stretch reads QYPDAAQIPG…LTVGDAVAVC (124 aa).

The protein belongs to the SLC26A/SulP transporter (TC 2.A.53) family. Interacts with OASA1 through its STAS domain. In terms of tissue distribution, expressed in lateral root cap, root hairs, epidermal and cortical cells of roots.

It localises to the membrane. High-affinity H(+)/sulfate cotransporter that mediates the uptake of the environmental sulfate by plant roots under low-sulfur conditions. Plays a central role in the regulation of sulfate assimilation. This chain is Sulfate transporter 1.1 (SULTR1;1), found in Arabidopsis thaliana (Mouse-ear cress).